We begin with the raw amino-acid sequence, 176 residues long: Small ribosomal subunit protein uS5 (176 aa).

The region spanning 14-77 (MQEKLIHINR…DQARRWMTSI (64 aa)) is the S5 DRBM domain.

The protein belongs to the universal ribosomal protein uS5 family. Part of the 30S ribosomal subunit. Contacts proteins S4 and S8.

Functionally, with S4 and S12 plays an important role in translational accuracy. Located at the back of the 30S subunit body where it stabilizes the conformation of the head with respect to the body. This chain is Small ribosomal subunit protein uS5, found in Acidithiobacillus ferrooxidans (strain ATCC 23270 / DSM 14882 / CIP 104768 / NCIMB 8455) (Ferrobacillus ferrooxidans (strain ATCC 23270)).